The primary structure comprises 290 residues: Elongation factor Ts (290 aa).

Residues 80-83 are involved in Mg(2+) ion dislocation from EF-Tu; the sequence is TDFV.

The protein belongs to the EF-Ts family.

The protein resides in the cytoplasm. Its function is as follows. Associates with the EF-Tu.GDP complex and induces the exchange of GDP to GTP. It remains bound to the aminoacyl-tRNA.EF-Tu.GTP complex up to the GTP hydrolysis stage on the ribosome. This chain is Elongation factor Ts, found in Neorickettsia sennetsu (strain ATCC VR-367 / Miyayama) (Ehrlichia sennetsu).